A 247-amino-acid chain; its full sequence is Translation initiation factor IF-3 (247 aa).

Disordered stretches follow at residues 1-20 (MIRE…TNRR) and 188-247 (LVRQ…PTAS). The segment at 182 to 247 (AQKARELVRQ…AAEAQSPTAS (66 aa)) is needed for vegetative and developmental functions, but not for viability. The span at 207-217 (AGKSAAGASSG) shows a compositional bias: low complexity. Positions 218 to 232 (AEEKAEETAEEKKEA) are enriched in basic and acidic residues. Positions 233–247 (QAAPAAAEAQSPTAS) are enriched in low complexity.

It belongs to the IF-3 family. Monomer.

The protein localises to the cytoplasm. In terms of biological role, IF-3 binds to the 30S ribosomal subunit and shifts the equilibrium between 70S ribosomes and their 50S and 30S subunits in favor of the free subunits, thus enhancing the availability of 30S subunits on which protein synthesis initiation begins. The protein is Translation initiation factor IF-3 of Myxococcus xanthus.